Consider the following 148-residue polypeptide: UPF0178 protein Pcar_2632 (148 aa).

Belongs to the UPF0178 family.

The chain is UPF0178 protein Pcar_2632 from Syntrophotalea carbinolica (strain DSM 2380 / NBRC 103641 / GraBd1) (Pelobacter carbinolicus).